The following is a 636-amino-acid chain: Phosphomethylpyrimidine synthase (636 aa).

Positions 48–70 are disordered; sequence DDTPTDFGGEKNPPVRVYDTSGP. Substrate contacts are provided by residues asparagine 231, methionine 260, tyrosine 289, histidine 325, 345–347, 386–389, and glutamate 425; these read SRG and DGLR. Histidine 429 lines the Zn(2+) pocket. Substrate is bound at residue tyrosine 452. Histidine 493 provides a ligand contact to Zn(2+). 3 residues coordinate [4Fe-4S] cluster: cysteine 573, cysteine 576, and cysteine 581.

This sequence belongs to the ThiC family. In terms of assembly, homodimer. [4Fe-4S] cluster is required as a cofactor.

The catalysed reaction is 5-amino-1-(5-phospho-beta-D-ribosyl)imidazole + S-adenosyl-L-methionine = 4-amino-2-methyl-5-(phosphooxymethyl)pyrimidine + CO + 5'-deoxyadenosine + formate + L-methionine + 3 H(+). It participates in cofactor biosynthesis; thiamine diphosphate biosynthesis. In terms of biological role, catalyzes the synthesis of the hydroxymethylpyrimidine phosphate (HMP-P) moiety of thiamine from aminoimidazole ribotide (AIR) in a radical S-adenosyl-L-methionine (SAM)-dependent reaction. The polypeptide is Phosphomethylpyrimidine synthase (Cellvibrio japonicus (strain Ueda107) (Pseudomonas fluorescens subsp. cellulosa)).